Here is a 456-residue protein sequence, read N- to C-terminus: tRNA modification GTPase MnmE (456 aa).

Residues Arg24, Glu81, and Lys120 each contribute to the (6S)-5-formyl-5,6,7,8-tetrahydrofolate site. A TrmE-type G domain is found at 216–379; sequence GMTVVIAGRP…LRDHLKACMG (164 aa). A K(+)-binding site is contributed by Asn226. GTP-binding positions include 226–231, 245–251, 270–273, 335–338, and 359–361; these read NAGKSS, TDIAGTT, DTAG, NKAD, and SAR. Residue Ser230 participates in Mg(2+) binding. Residues Thr245, Ile247, and Thr250 each contribute to the K(+) site. Thr251 is a binding site for Mg(2+). Lys456 serves as a coordination point for (6S)-5-formyl-5,6,7,8-tetrahydrofolate.

This sequence belongs to the TRAFAC class TrmE-Era-EngA-EngB-Septin-like GTPase superfamily. TrmE GTPase family. Homodimer. Heterotetramer of two MnmE and two MnmG subunits. The cofactor is K(+).

It localises to the cytoplasm. Exhibits a very high intrinsic GTPase hydrolysis rate. Involved in the addition of a carboxymethylaminomethyl (cmnm) group at the wobble position (U34) of certain tRNAs, forming tRNA-cmnm(5)s(2)U34. The polypeptide is tRNA modification GTPase MnmE (Pseudomonas entomophila (strain L48)).